Consider the following 96-residue polypeptide: Protein RnfH (96 aa).

The protein belongs to the UPF0125 (RnfH) family.

The protein is Protein RnfH of Shigella flexneri.